A 669-amino-acid chain; its full sequence is p135Gag-Myb-Ets-transforming protein (669 aa).

Residues 1–10 (NSTMRRKVEQ) are compositionally biased toward basic and acidic residues. Disordered regions lie at residues 1–27 (NSTM…SATT) and 132–153 (TQNH…NTMT). A transcriptional activation domain region spans residues 90 to 142 (PAAAAIQRHYNDEDPEKEKRIKELELLLMSTENELKGQQALPTQNHTANYPGW). The PNT domain occupies 276–361 (ATFSGFAKEQ…EHLEILQKEE (86 aa)). A DNA-binding region (ETS) is located at residues 556–640 (GSGPIQLWQF…AGKRYVYRFV (85 aa)).

The protein localises to the host nucleus. Functionally, DNA-binding protein that specifically recognizes the sequence 5'-YAAC[GT]G-3'. The Myb-Ets protein induces predominantly erythroblastosis in chicken and transforms avian erythroblasts and immature myelomonocytic cells in culture. It appears that the Ets domain is responsible for the effects on erythroid cells and that the Myb domain encodes the myeloid-transforming capacity. The chain is p135Gag-Myb-Ets-transforming protein (GAG) from Avian leukemia virus E26.